The following is a 465-amino-acid chain: COP9 signalosome complex subunit 5 (465 aa).

Residues 74 to 216 (VLLSKLACSK…IGSFRTYQDQ (143 aa)) form the MPN domain. Residues His162, His164, and Asp175 each coordinate Zn(2+). Residues 162–175 (HSHPGYDCWLSNID) carry the JAMM motif motif. The interval 364–386 (SSIHTQMNNQNNQQERNSPKRPH) is disordered.

It belongs to the peptidase M67A family. CSN5 subfamily. Component of the COP9 signalosome (CSN) complex.

The protein resides in the cytoplasm. It localises to the nucleus. Functionally, catalytic Component of the COP9 signalosome (CSN) complex that acts as an regulator of the ubiquitin (Ubl) conjugation pathway by mediating the deneddylation of the cullin subunit of SCF-type E3 ubiquitin-protein ligase complexes. This is COP9 signalosome complex subunit 5 (RRI1) from Candida glabrata (strain ATCC 2001 / BCRC 20586 / JCM 3761 / NBRC 0622 / NRRL Y-65 / CBS 138) (Yeast).